The chain runs to 46 residues: Light-harvesting protein B800/850/890 alpha-1 chain (46 aa).

The Cytoplasmic segment spans residues 1–12 (MWRLWKLYDPRR). A helical membrane pass occupies residues 13–33 (VLIGIFSWLAVLALVIHFILL). An a bacteriochlorophyll-binding site is contributed by H29. Residues 34–46 (STDRFNWVGGAAN) are Periplasmic-facing.

It belongs to the antenna complex alpha subunit family. The core complex is formed by different alpha and beta chains, binding bacteriochlorophyll molecules, and arranged most probably in tetrameric structures disposed around the reaction center. The non-pigmented gamma chains may constitute additional components.

The protein resides in the cell inner membrane. In terms of biological role, antenna complexes are light-harvesting systems, which transfer the excitation energy to the reaction centers. In Halorhodospira halophila (strain DSM 244 / SL1) (Ectothiorhodospira halophila (strain DSM 244 / SL1)), this protein is Light-harvesting protein B800/850/890 alpha-1 chain.